Reading from the N-terminus, the 2039-residue chain is Methylcytosine dioxygenase TET1 (2039 aa).

The span at 1 to 19 (MSRSRPAKPSKSVKTKLQK) shows a compositional bias: basic residues. Disordered stretches follow at residues 1-79 (MSRS…AGAA), 119-168 (VVTP…NGEQ), and 227-286 (DNEC…GFPD). Basic and acidic residues-rich tracts occupy residues 53-65 (KRRDGKKETEDKT) and 138-149 (IQDEPGVKHSEN). Composition is skewed to polar residues over residues 150 to 168 (DSVPSQHATVSPGTENGEQ) and 241 to 265 (QRSTSEVTSQKNTSNQLADLSSQVE). The tract at residues 512 to 657 (LDLTQGSQAA…NGPKSESMDC (146 aa)) is sufficient for binding to genomic CpG islands. The CXXC-type zinc finger occupies 567-608 (ERRKRKACGVCEPCQQKANCGECTYCKNRKNSHQICKKRKCE). Positions 574, 577, 580, 586, 589, 592, 602, and 607 each coordinate Zn(2+). 8 disordered regions span residues 613 to 670 (KPEA…QRLD), 711 to 735 (CDANLTGVENPQPSEDDKQQTNPSP), 820 to 859 (GAEPTIFNNHPNTHSAGSRPHPPEKVPNKEPKDGSPVQPS), 882 to 906 (QLSEAPSESSSPSKPEKDEEAHQKT), 964 to 993 (QGYPSSPTAEKKGAAGGRAPFDGFENSHPL), 1050 to 1129 (VRNA…KKQE), 1209 to 1240 (VEPSDSLPTCQFKTESGGQTFAEPADNSQGQP), and 1322 to 1341 (KREAQTSSNGPLGPTTDSAQ). Over residues 653-670 (ESMDCSRRGHGEEEQRLD) the composition is skewed to basic and acidic residues. Residues 825–835 (IFNNHPNTHSA) show a composition bias toward polar residues. Positions 840–852 (HPPEKVPNKEPKD) are enriched in basic and acidic residues. The residue at position 854 (Ser-854) is a Phosphoserine. The span at 884-894 (SEAPSESSSPS) shows a compositional bias: low complexity. The span at 895–904 (KPEKDEEAHQ) shows a compositional bias: basic and acidic residues. Over residues 1053 to 1064 (AESTPESLVAKN) the composition is skewed to polar residues. A compositionally biased stretch (basic residues) spans 1094–1116 (KPKKAQKKARATPHANKRKKKPP). Composition is skewed to polar residues over residues 1214–1227 (SLPTCQFKTESGGQ) and 1326–1341 (QTSSNGPLGPTTDSAQ). The Zn(2+) site is built by Cys-1371, Cys-1373, Cys-1430, His-1456, and Cys-1458. Arg-1499 contacts 2-oxoglutarate. Residues Cys-1509, Cys-1511, Cys-1527, and Cys-1536 each contribute to the Zn(2+) site. The tract at residues 1528–1541 (SWSMYFNGCKFGRS) is interaction with DNA. Lys-1537 participates in a covalent cross-link: Glycyl lysine isopeptide (Lys-Gly) (interchain with G-Cter in ubiquitin). Cys-1628 contacts Zn(2+). Cys-1644 is a binding site for 2-oxoglutarate. His-1650 lines the Zn(2+) pocket. The Fe cation site is built by His-1652 and Asp-1654. Asn-1657 is a binding site for substrate. His-1685 serves as a coordination point for 2-oxoglutarate. The segment covering 1734–1743 (GKRAKMKQNH) has biased composition (basic residues). Disordered stretches follow at residues 1734 to 1760 (GKRAKMKQNHNKSGSHNTKSFSSASST) and 1830 to 1901 (AAHP…LPQL). Low complexity predominate over residues 1748 to 1760 (SHNTKSFSSASST). Polar residues predominate over residues 1850–1875 (TSPSEQLTSNQSNQQLPLLSNSQKLA). The segment covering 1880 to 1895 (EDERHPEADEPQHPED) has biased composition (basic and acidic residues). A Fe cation-binding site is contributed by His-1939. Residue 1954–1956 (RVS) participates in 2-oxoglutarate binding. Residue 1960–1962 (YQH) coordinates substrate. Residue His-1970 coordinates Zn(2+).

It belongs to the TET family. As to quaternary structure, interacts with SIN3A; recruits the transcriptional co-repressor SIN3A to gene promoters. Interacts with HCFC1. Interacts (via C-terminus) with OGT. Found in a complex composed of at least SINHCAF, SIN3A, HDAC1, SAP30, RBBP4, OGT and TET1. Interacts with QSER1. Interacts with NONO (via DNA-binding domain); this interaction recruits TET1 to genomic loci. Interacts with FOXA2; this interaction may recruit TET1 to specific enhancers to preserve their unmethylated status and hence allowing gene expression. Interacts with RNF2. Directly interacts (via C-terminus) with the DCAF1 component of the CRL4(VprBP) E3 ubiquitin-protein ligase complex. In terms of assembly, interacts with UHRF1; this interaction induces the recruitment of TET1 to replicating heterochromatin. Interacts with DCAF1. The cofactor is Fe(2+). Zn(2+) is required as a cofactor. Glycosylated. Interaction with OGT leads to GlcNAcylation. Post-translationally, monoubiquitinated by the DCX (DDB1-CUL4-X-box) E3 ubiquitin-protein ligase complex called CRL4(VprBP) or CUL4A-RBX1-DDB1-DCAF1/VPRBP complex. In terms of processing, monoubiquitinated by the DCX (DDB1-CUL4-X-box) E3 ubiquitin-protein ligase complex called CRL4(VprBP) or CUL4A-RBX1-DDB1-DCAF1/VPRBP complex; this modification promotes binding to DNA. In terms of tissue distribution, expressed in germinal vesicle (GV) stage and MII-stage oocytes and in early embryos. Also detected somatic tissues, including brain, liver and kidney, but at very low levels. As to expression, predominantly expressed in early embryos. Also expressed in embryonic stem cells and in primordial germ cells. Expressed in adult tissues, including brain cortex, cerebellum, heart, kidney, liver, muscle and spleen, although at much lower levels than isoform 2. In the brain, expressed at higher levels in glial cells than in neurons. Expressed in placenta. Expressed in the pituitary, most probably in thyrotropes. Preferentially expressed in differentiated cells, including in cerebral cortex, cerebellum and thymus. Also expressed in heart, kidney, liver, muscle and spleen at much higher levels than isoform 1. In the brain, expressed at higher levels in neurons than in glial cells. Expressed in the olfactory bulb and in the mammary gland.

The protein localises to the nucleus. Its subcellular location is the chromosome. The catalysed reaction is a 5-methyl-2'-deoxycytidine in DNA + 2-oxoglutarate + O2 = a 5-hydroxymethyl-2'-deoxycytidine in DNA + succinate + CO2. It catalyses the reaction a 5-hydroxymethyl-2'-deoxycytidine in DNA + 2-oxoglutarate + O2 = a 5-formyl-2'-deoxycytidine in DNA + succinate + CO2 + H2O. The enzyme catalyses a 5-formyl-2'-deoxycytidine in DNA + 2-oxoglutarate + O2 = a 5-carboxyl-2'-deoxycytidine in DNA + succinate + CO2 + H(+). Functionally, dioxygenase that plays a key role in active DNA demethylation, by catalyzing the sequential oxidation of the modified genomic base 5-methylcytosine (5mC) into 5-hydroxymethylcytosine (5hmC), 5-formylcytosine (5fC), and 5-carboxylcytosine (5caC). In addition to its role in DNA demethylation, plays a more general role in chromatin regulation by recruiting histone modifying protein complexes to alter histone marks and chromatin accessibility, leading to both activation and repression of gene expression. Plays therefore a role in many biological processes, including stem cell maintenance, T- and B-cell development, inflammation regulation, iron homeostasis, neural activity or DNA repair. Involved in the balance between pluripotency and lineage commitment of cells it plays a role in embryonic stem cells maintenance and inner cell mass cell specification. Together with QSER1, plays an essential role in the protection and maintenance of transcriptional and developmental programs to inhibit the binding of DNMT3A/3B and therefore de novo methylation. May play a role in the pancreatic beta-cell specification during development. In this context, may function as an upstream epigenetic regulator of PAX4 presumably through direct recruitment by FOXA2 to a PAX4 enhancer to preserve its unmethylated status, thereby potentiating PAX4 expression to adopt beta-cell fate during endocrine lineage commitment. Under DNA hypomethylation conditions, such as in female meiotic germ cells, may induce epigenetic reprogramming of pericentromeric heterochromatin (PCH), the constitutive heterochromatin of pericentromeric regions. PCH forms chromocenters in the interphase nucleus and chromocenters cluster at the prophase of meiosis. In this context, may also be essential for chromocenter clustering in a catalytic activity-independent manner, possibly through the recruitment polycomb repressive complex 1 (PRC1) to the chromocenters. During embryonic development, may be required for normal meiotic progression in oocytes and meiotic gene activation. Binds preferentially to DNA containing cytidine-phosphate-guanosine (CpG) dinucleotides over CpH (H=A, T, and C), hemimethylated-CpG and hemimethylated-hydroxymethyl-CpG. Dioxygenase that plays a key role in active DNA demethylation. Binds to promoters, particularly to those with high CG content. In hippocampal neurons, isoform 1 regulates the expression of a unique subset of genes compared to isoform 2, although some overlap between both isoforms, hence differentially regulates excitatory synaptic transmission. In hippocampal neuron cell cultures, isoform 1 controls both miniature excitatory postsynaptic current amplitude and frequency. Isoform 1 may regulate genes involved in hippocampal-dependent memory, leading to positive regulation of memory, contrary to isoform 2 that may decrease memory. Its function is as follows. Dioxygenase that plays a key role in active DNA demethylation. As isoform 1, binds to promoters, particularly to those with high CG content, however displays reduced global chromatin affinity compared with isoform 1, leading to decreased global DNA demethylation compared with isoform 1. Contrary to isoform 1, isoform 2 localizes during S phase to sites of ongoing DNA replication in heterochromatin, causing a significant de novo 5hmC formation, globally, and more so in heterochromatin, including LINE 1 interspersed DNA repeats leading to their activation. In hippocampal neurons, isoform 2 regulates the expression of a unique subset of genes compared with isoform 1, although some overlap between both isoforms, hence differentially regulating excitatory synaptic transmission. In hippocampal neuron cell cultures, isoform 2 controls miniature excitatory postsynaptic current frequency, but not amplitude. Isoform 2 may regulate genes involved in hippocampal-dependent memory, leading to negative regulation of memory, contrary to isoform 1 that may improve memory. In immature and partially differentiated gonadotrope cells, represses luteinizing hormone gene LHB expression directly and does not catalyze 5hmC at the gene promoter. This Mus musculus (Mouse) protein is Methylcytosine dioxygenase TET1 (Tet1).